The primary structure comprises 459 residues: Ammonium transporter Rh type B (459 aa).

Residues 1 to 10 (MAESTNLRLR) are Cytoplasmic-facing. The helical transmembrane segment at 11–31 (LPLICIILEVILIILFGVLVE) threads the bilayer. Over 32–58 (YNDDTDAKKWNKNNSTDPATNEFYYRY) the chain is Extracellular. N45 is a glycosylation site (N-linked (GlcNAc...) asparagine). Residues 59-79 (PSFQDVHVMIFVGFGFLMTFL) traverse the membrane as a helical segment. The Cytoplasmic portion of the chain corresponds to 80-87 (QRYGFSSM). A helical transmembrane segment spans residues 88–108 (GFNFLIAAFSLQWATLMQGFF). At 109 to 121 (HGMHHGKIHVGVT) the chain is on the extracellular side. The helical transmembrane segment at 122-142 (SMINADFCTGAVLISFGAVLG) threads the bilayer. Topologically, residues 143–149 (KTSPVQL) are cytoplasmic. Residues 150-170 (LVMAILEVTLFAVNEYILLSI) traverse the membrane as a helical segment. Topologically, residues 171–176 (LGANDA) are extracellular. A helical transmembrane segment spans residues 177–197 (GGSMTIHTFGAYFGLMVTRIL). Residues 198 to 216 (HRPNLDKSKHKNSSVYHSD) are Cytoplasmic-facing. A helical membrane pass occupies residues 217–237 (LFAMIGTIFLWMFWPSFNSAI). Over 238-248 (TQYGDPQHRTA) the chain is Extracellular. A helical membrane pass occupies residues 249 to 269 (ANTYYSLAACTLATFGFSSLV). Residues 270–274 (NPEGK) lie on the Cytoplasmic side of the membrane. Residues 275–295 (LDMVHIQNAALAGGVAVGTAG) form a helical membrane-spanning segment. Residue E296 is a topological domain, extracellular. The chain crosses the membrane as a helical span at residues 297 to 317 (MMLTPFGSMIVGFLAGTISVL). Over 318 to 340 (GYKYLTPFMESKLKIQDTCGIHN) the chain is Cytoplasmic. Residues 341 to 361 (LHGMPGILGAIVGAVTAALAS) traverse the membrane as a helical segment. Residues 362-392 (RDVYGNGLDKVFLEAADNSQWSAQTKGGFQA) lie on the Extracellular side of the membrane. The helical transmembrane segment at 393–413 (ISLAVTLGIALIGGLITGFLL) threads the bilayer. At 414–459 (KLPIYGTPPDTQCFEDAVYWEVPGEEEDHHELNEVSTQNEVEKLNS) the chain is on the cytoplasmic side. A disordered region spans residues 440 to 459 (EDHHELNEVSTQNEVEKLNS).

It belongs to the ammonium transporter (TC 2.A.49) family. Rh subfamily.

It localises to the basolateral cell membrane. The protein localises to the cytoplasmic vesicle membrane. In terms of biological role, functions as an ammonia transporter. May play a role in the elimination of ammonia in the gill. The sequence is that of Ammonium transporter Rh type B (rhbg) from Danio rerio (Zebrafish).